Reading from the N-terminus, the 270-residue chain is Gap junction beta-3 protein (270 aa).

Residues 1–20 lie on the Cytoplasmic side of the membrane; that stretch reads MDWKTLQALLSGVNKYSTAF. Residues 21-40 traverse the membrane as a helical segment; it reads GRIWLSVVFVFRVLVYVVAA. The Extracellular segment spans residues 41–75; it reads ERVWGDEQKDFDCNTKQPGCTNVCYDNYFPISNIR. The helical transmembrane segment at 76-98 threads the bilayer; sequence LWALQLIFVTCPSLLVILHVAYR. Residues 99 to 126 lie on the Cytoplasmic side of the membrane; sequence EERERRHRQKHGDQCAKLYDNAGKKHGG. A helical membrane pass occupies residues 127-149; the sequence is LWWTYLFSLIFKLIIEFLFLYLL. Topologically, residues 150–187 are extracellular; it reads HTLWHGFNMPRLVQCANVAPCPNIVDCYIARPTEKKIF. The helical transmembrane segment at 188–210 threads the bilayer; that stretch reads TYFMVGASAVCIVLTICELCYLI. Residues 211–270 lie on the Cytoplasmic side of the membrane; the sequence is CHRVLRGLHKDKPRGGCSPSSSASRASTCRCHHKLVEAGEVDPDPGNNKLQASAPNLTPI. A disordered region spans residues 250–270; sequence EVDPDPGNNKLQASAPNLTPI. Residues 258 to 270 are compositionally biased toward polar residues; that stretch reads NKLQASAPNLTPI.

It belongs to the connexin family. Beta-type (group I) subfamily. As to quaternary structure, a connexon is composed of a hexamer of connexins. Interacts with CNST.

It localises to the cell membrane. It is found in the cell junction. The protein localises to the gap junction. One gap junction consists of a cluster of closely packed pairs of transmembrane channels, the connexons, through which materials of low MW diffuse from one cell to a neighboring cell. This Homo sapiens (Human) protein is Gap junction beta-3 protein (GJB3).